A 335-amino-acid polypeptide reads, in one-letter code: Pregnancy-specific beta-1-glycoprotein 5 (335 aa).

An N-terminal signal peptide occupies residues 1–34 (MGPLSAPPCTQHITWKGLLLTASLLNFWNLPITA). Positions 35–144 (QVTIEALPPK…TGYFTFNLYL (110 aa)) constitute an Ig-like V-type domain. N-linked (GlcNAc...) asparagine glycans are attached at residues asparagine 104 and asparagine 111. The Cell attachment site signature appears at 127–129 (RGD). Ig-like C2-type domains are found at residues 147–234 (PKPY…VTLN) and 239–317 (PDLP…KSMT). 2 disulfides stabilise this stretch: cysteine 169–cysteine 217 and cysteine 261–cysteine 301. Residues asparagine 175 and asparagine 210 are each glycosylated (N-linked (GlcNAc...) asparagine).

This sequence belongs to the immunoglobulin superfamily. CEA family. Synthesized by syncytiotrophoblast of the placenta.

It is found in the secreted. This Homo sapiens (Human) protein is Pregnancy-specific beta-1-glycoprotein 5 (PSG5).